Reading from the N-terminus, the 368-residue chain is MTTLHSTPRADGFHMPAEWAPQTQTWMIWPERPDNWRLGGKPAQAAHVAVAKAIARFEPVTVAVSAGQYENARARLDVPNIRVVEMSSDDAWVRDTGPTFVINRSGEVRGVNWDFNAWGGFDGGLYSPWNRDSQIGGKILEIERAPRYCTEGFVLEGGSIHVDGEGTLITTEECLLNSNRNPHLDRAQIEAVLSANLAVDKIIWLPDGLFNDETDGHVDNFCCYVRPGEVLLAWTDDPQDPNYARCHAAMNVLQSSTDAQGRSFTVHKMPIPGPLYATEAECAGVDPVDGTQERNPTVRLAGSYVNFLIVNGGIIAPSFDDPLDSQAKAILQDLFPQHEVVMVPGRELLLGGGNIHCLTQQQPAPHKN.

Cys357 serves as the catalytic Amidino-cysteine intermediate.

This sequence belongs to the agmatine deiminase family. As to quaternary structure, homodimer.

The catalysed reaction is agmatine + H2O = N-carbamoylputrescine + NH4(+). It participates in amine and polyamine biosynthesis; putrescine biosynthesis via agmatine pathway; N-carbamoylputrescine from agmatine: step 1/1. Its function is as follows. Mediates the hydrolysis of agmatine into N-carbamoylputrescine in the arginine decarboxylase (ADC) pathway of putrescine biosynthesis, a basic polyamine. The sequence is that of Agmatine deiminase from Pseudomonas fluorescens (strain SBW25).